The following is a 128-amino-acid chain: MQRHMLKSKIHRAAVTHCELHYEGSCAIDEDLLEAAGLIENERIDIWNINNGERFSTYAIKGERGSGMISLNGSAARRAQLGDLVIIAAFAMVDEAELQAGWKPKLVFIDEGNKIKGHRDHVPTQSWT.

S25 serves as the catalytic Schiff-base intermediate with substrate; via pyruvic acid. The residue at position 25 (S25) is a Pyruvic acid (Ser). T57 contributes to the substrate binding site. Y58 serves as the catalytic Proton donor. 73-75 (GSA) is a binding site for substrate.

The protein belongs to the PanD family. In terms of assembly, heterooctamer of four alpha and four beta subunits. Pyruvate is required as a cofactor. Is synthesized initially as an inactive proenzyme, which is activated by self-cleavage at a specific serine bond to produce a beta-subunit with a hydroxyl group at its C-terminus and an alpha-subunit with a pyruvoyl group at its N-terminus.

It localises to the cytoplasm. The catalysed reaction is L-aspartate + H(+) = beta-alanine + CO2. It participates in cofactor biosynthesis; (R)-pantothenate biosynthesis; beta-alanine from L-aspartate: step 1/1. Functionally, catalyzes the pyruvoyl-dependent decarboxylation of aspartate to produce beta-alanine. The protein is Aspartate 1-decarboxylase of Burkholderia vietnamiensis (strain G4 / LMG 22486) (Burkholderia cepacia (strain R1808)).